The following is a 462-amino-acid chain: Spermatogenesis- and oogenesis-specific basic helix-loop-helix-containing protein 2 (462 aa).

Residues 200–251 enclose the bHLH domain; that stretch reads KASFLHSSKEKLRRERIKFCCEQLRTLLPYVKGRKSDVASVIEATVDYVKQV. Residues 422–462 form a disordered region; sequence PASSRTASSSIFRGFRESDSGHQASQQPTGPSLQPQDSSYF. Positions 442 to 462 are enriched in polar residues; the sequence is GHQASQQPTGPSLQPQDSSYF.

The protein localises to the nucleus. In terms of biological role, probable transcription factor, which may be involved in spermatogenesis and oogenesis. This Rattus norvegicus (Rat) protein is Spermatogenesis- and oogenesis-specific basic helix-loop-helix-containing protein 2 (Sohlh2).